The following is a 353-amino-acid chain: UDP-N-acetylglucosamine--N-acetylmuramyl-(pentapeptide) pyrophosphoryl-undecaprenol N-acetylglucosamine transferase (353 aa).

Residues N123, R161, S189, I243, 262 to 267 (ALTVSE), and Q287 each bind UDP-N-acetyl-alpha-D-glucosamine.

The protein belongs to the glycosyltransferase 28 family. MurG subfamily.

Its subcellular location is the cell membrane. It catalyses the reaction di-trans,octa-cis-undecaprenyl diphospho-N-acetyl-alpha-D-muramoyl-L-alanyl-D-glutamyl-meso-2,6-diaminopimeloyl-D-alanyl-D-alanine + UDP-N-acetyl-alpha-D-glucosamine = di-trans,octa-cis-undecaprenyl diphospho-[N-acetyl-alpha-D-glucosaminyl-(1-&gt;4)]-N-acetyl-alpha-D-muramoyl-L-alanyl-D-glutamyl-meso-2,6-diaminopimeloyl-D-alanyl-D-alanine + UDP + H(+). Its pathway is cell wall biogenesis; peptidoglycan biosynthesis. Cell wall formation. Catalyzes the transfer of a GlcNAc subunit on undecaprenyl-pyrophosphoryl-MurNAc-pentapeptide (lipid intermediate I) to form undecaprenyl-pyrophosphoryl-MurNAc-(pentapeptide)GlcNAc (lipid intermediate II). The protein is UDP-N-acetylglucosamine--N-acetylmuramyl-(pentapeptide) pyrophosphoryl-undecaprenol N-acetylglucosamine transferase of Buchnera aphidicola subsp. Baizongia pistaciae (strain Bp).